The primary structure comprises 334 residues: Holliday junction branch migration complex subunit RuvB (334 aa).

A large ATPase domain (RuvB-L) region spans residues 4-184 (ADRIISASPK…FGIVQRLEFY (181 aa)). Residues Ile-23, Arg-24, Gly-65, Lys-68, Thr-69, Thr-70, 131-133 (EDY), Arg-174, Tyr-184, and Arg-221 each bind ATP. Position 69 (Thr-69) interacts with Mg(2+). The small ATPAse domain (RuvB-S) stretch occupies residues 185–255 (SVDDLTSIVK…IAKQALAMLD (71 aa)). The tract at residues 258 to 334 (SEGFDFMDIK…YAHLGIAKLD (77 aa)) is head domain (RuvB-H). 3 residues coordinate DNA: Arg-294, Arg-313, and Arg-318.

Belongs to the RuvB family. As to quaternary structure, homohexamer. Forms an RuvA(8)-RuvB(12)-Holliday junction (HJ) complex. HJ DNA is sandwiched between 2 RuvA tetramers; dsDNA enters through RuvA and exits via RuvB. An RuvB hexamer assembles on each DNA strand where it exits the tetramer. Each RuvB hexamer is contacted by two RuvA subunits (via domain III) on 2 adjacent RuvB subunits; this complex drives branch migration. In the full resolvosome a probable DNA-RuvA(4)-RuvB(12)-RuvC(2) complex forms which resolves the HJ.

The protein localises to the cytoplasm. The catalysed reaction is ATP + H2O = ADP + phosphate + H(+). Its function is as follows. The RuvA-RuvB-RuvC complex processes Holliday junction (HJ) DNA during genetic recombination and DNA repair, while the RuvA-RuvB complex plays an important role in the rescue of blocked DNA replication forks via replication fork reversal (RFR). RuvA specifically binds to HJ cruciform DNA, conferring on it an open structure. The RuvB hexamer acts as an ATP-dependent pump, pulling dsDNA into and through the RuvAB complex. RuvB forms 2 homohexamers on either side of HJ DNA bound by 1 or 2 RuvA tetramers; 4 subunits per hexamer contact DNA at a time. Coordinated motions by a converter formed by DNA-disengaged RuvB subunits stimulates ATP hydrolysis and nucleotide exchange. Immobilization of the converter enables RuvB to convert the ATP-contained energy into a lever motion, pulling 2 nucleotides of DNA out of the RuvA tetramer per ATP hydrolyzed, thus driving DNA branch migration. The RuvB motors rotate together with the DNA substrate, which together with the progressing nucleotide cycle form the mechanistic basis for DNA recombination by continuous HJ branch migration. Branch migration allows RuvC to scan DNA until it finds its consensus sequence, where it cleaves and resolves cruciform DNA. This is Holliday junction branch migration complex subunit RuvB from Actinobacillus pleuropneumoniae serotype 5b (strain L20).